The sequence spans 246 residues: Pyridoxine 5'-phosphate synthase (246 aa).

Asparagine 9 lines the 3-amino-2-oxopropyl phosphate pocket. Residue 11–12 coordinates 1-deoxy-D-xylulose 5-phosphate; it reads DH. Residue arginine 20 participates in 3-amino-2-oxopropyl phosphate binding. The active-site Proton acceptor is histidine 45. Residues arginine 47 and histidine 52 each contribute to the 1-deoxy-D-xylulose 5-phosphate site. The active-site Proton acceptor is glutamate 72. Residue threonine 102 coordinates 1-deoxy-D-xylulose 5-phosphate. Histidine 193 (proton donor) is an active-site residue. Residues glycine 194 and 215–216 contribute to the 3-amino-2-oxopropyl phosphate site; that span reads GH.

It belongs to the PNP synthase family. Homooctamer; tetramer of dimers.

The protein resides in the cytoplasm. The enzyme catalyses 3-amino-2-oxopropyl phosphate + 1-deoxy-D-xylulose 5-phosphate = pyridoxine 5'-phosphate + phosphate + 2 H2O + H(+). It functions in the pathway cofactor biosynthesis; pyridoxine 5'-phosphate biosynthesis; pyridoxine 5'-phosphate from D-erythrose 4-phosphate: step 5/5. In terms of biological role, catalyzes the complicated ring closure reaction between the two acyclic compounds 1-deoxy-D-xylulose-5-phosphate (DXP) and 3-amino-2-oxopropyl phosphate (1-amino-acetone-3-phosphate or AAP) to form pyridoxine 5'-phosphate (PNP) and inorganic phosphate. This Colwellia psychrerythraea (strain 34H / ATCC BAA-681) (Vibrio psychroerythus) protein is Pyridoxine 5'-phosphate synthase.